We begin with the raw amino-acid sequence, 112 residues long: Protein AV2 (112 aa).

This sequence belongs to the geminiviridae protein AV2/V2 family. In terms of assembly, interacts with host SGS3.

It localises to the host cytoplasm. It is found in the host perinuclear region. Functionally, through its interaction with host SGS3, acts as a suppressor of RNA-mediated gene silencing, also known as post-transcriptional gene silencing (PTGS), a mechanism of plant viral defense that limits the accumulation of viral RNAs. The chain is Protein AV2 from Indian cassava mosaic virus (ICMV).